Here is a 156-residue protein sequence, read N- to C-terminus: Small ribosomal subunit protein uS7 (156 aa).

It belongs to the universal ribosomal protein uS7 family. In terms of assembly, part of the 30S ribosomal subunit. Contacts proteins S9 and S11.

In terms of biological role, one of the primary rRNA binding proteins, it binds directly to 16S rRNA where it nucleates assembly of the head domain of the 30S subunit. Is located at the subunit interface close to the decoding center, probably blocks exit of the E-site tRNA. The protein is Small ribosomal subunit protein uS7 of Erythrobacter litoralis (strain HTCC2594).